The following is a 971-amino-acid chain: Reversion-inducing cysteine-rich protein with Kazal motifs (971 aa).

The N-terminal stretch at 1–22 (MATVRASLRGALLLLLAVAGVA) is a signal peptide. A Knot 1 repeat occupies 37 to 84 (CCNHSKDNQMCRDVCEQIFSSKSESRLKHLLQRAPDYCPETMVEIWNC). Residues 37-338 (CCNHSKDNQM…NPVEVSMLTC (302 aa)) form a 5 X Knot repeats region. 2 N-linked (GlcNAc...) asparagine glycosylation sites follow: N39 and N86. 2 Knot repeats span residues 104-141 (CCEL…LFSC) and 151-197 (CCSY…LIHC). The N-linked (GlcNAc...) asparagine glycan is linked to N200. Knot repeat units follow at residues 216 to 263 (CCDR…LWQC) and 292 to 338 (CCSK…MLTC). N-linked (GlcNAc...) asparagine glycosylation is found at N297 and N352. Kazal-like domains lie at 627-673 (TFTG…SCMS), 698-752 (TFDK…PCQP), and 753-789 (FCRA…DCQA). 6 disulfide bridges follow: C633/C658, C635/C654, C643/C671, C716/C735, C724/C750, and C761/C787. S942 carries the GPI-anchor amidated serine lipid modification. Residues 943–971 (AGVRARPSCHSLLLPLSLGLALHLLWTYN) constitute a propeptide, removed in mature form.

The protein belongs to the RECK family. In terms of assembly, interacts (via knot repeats) with WNT7A (via disordered linker region); the interaction is direct. Interacts (via knot repeats) with WNT7B (via disordered linker region); the interaction is direct. Interacts with ADGRA2; the interaction is direct. Interacts with MMP9. Post-translationally, N-glycosylated. Expressed in various tissues and untransformed cells. It is undetectable in tumor-derived cell lines and oncogenically transformed cells.

It is found in the cell membrane. Functions together with ADGRA2 to enable brain endothelial cells to selectively respond to Wnt7 signals (WNT7A or WNT7B). Plays a key role in Wnt7-specific responses: required for central nervous system (CNS) angiogenesis and blood-brain barrier regulation. Acts as a Wnt7-specific coactivator of canonical Wnt signaling by decoding Wnt ligands: acts by interacting specifically with the disordered linker region of Wnt7, thereby conferring ligand selectivity for Wnt7. ADGRA2 is then required to deliver RECK-bound Wnt7 to frizzled by assembling a higher-order RECK-ADGRA2-Fzd-LRP5-LRP6 complex. Also acts as a serine protease inhibitor: negatively regulates matrix metalloproteinase-9 (MMP9) by suppressing MMP9 secretion and by direct inhibition of its enzymatic activity. Also inhibits metalloproteinase activity of MMP2 and MMP14 (MT1-MMP). In Homo sapiens (Human), this protein is Reversion-inducing cysteine-rich protein with Kazal motifs.